Consider the following 374-residue polypeptide: Alpha-N-acetylgalactosaminide alpha-2,6-sialyltransferase 2 (374 aa).

The Cytoplasmic segment spans residues 1 to 7 (MGLPRGS). A helical; Signal-anchor for type II membrane protein membrane pass occupies residues 8–28 (FFWLLLLLTAACSGLLFALYF). Topologically, residues 29–374 (SAVQRYPGPA…KAGILQLYQR (346 aa)) are lumenal. 2 disulfides stabilise this stretch: Cys-66–Cys-148 and Cys-151–Cys-317. 2 N-linked (GlcNAc...) asparagine glycosylation sites follow: Asn-85 and Asn-130. Residue Asn-156 coordinates CMP-N-acetyl-beta-neuraminate. Asn-161 is a glycosylation site (N-linked (GlcNAc...) asparagine). 3 residues coordinate CMP-N-acetyl-beta-neuraminate: Asn-179, Ser-304, and His-336.

It belongs to the glycosyltransferase 29 family. Expressed in skeletal muscle, heart, kidney, placenta, lung and leukocytes.

It is found in the golgi apparatus membrane. It carries out the reaction a beta-D-galactosyl-(1-&gt;3)-N-acetyl-alpha-D-galactosaminyl derivative + CMP-N-acetyl-beta-neuraminate = a beta-D-galactosyl-(1-&gt;3)-[N-acetyl-alpha-neuraminyl-(2-&gt;6)]-N-acetyl-alpha-D-galactosaminyl derivative + CMP + H(+). It catalyses the reaction a 3-O-[N-acetyl-alpha-D-galactosaminyl]-L-threonyl-[protein] + CMP-N-acetyl-beta-neuraminate = a 3-O-[N-acetyl-alpha-neuraminosyl-(2-&gt;6)-N-acetyl-alpha-D-galactosaminyl]-L-threonyl-[protein] + CMP + H(+). The catalysed reaction is a 3-O-[N-acetyl-alpha-neuraminyl-(2-&gt;3)-beta-D-galactosyl-(1-&gt;3)-N-acetyl-alpha-D-galactosaminyl]-L-threonyl-[protein] + CMP-N-acetyl-beta-neuraminate = a 3-O-{alpha-Neu5Ac-(2-&gt;3)-beta-D-Gal-(1-&gt;3)-[alpha-Neu5Ac-(2-&gt;6)]-alpha-D-GalNAc}-L-threonyl-[protein] + CMP + H(+). It functions in the pathway protein modification; protein glycosylation. Its function is as follows. Catalyzes the transfer of N-acetylneuraminyl groups onto glycan chains in glycoproteins. Conjugates sialic acid with an alpha-2-6 linkage to N-acetylgalactosamine (GalNAc) glycan chains linked to serine or threonine in glycoproteins. Sialylates alphaGalNAc- and Galbeta1-&gt;3GalNAc-O-Ser/Thr epitopes also known as Tn and T antigens. This chain is Alpha-N-acetylgalactosaminide alpha-2,6-sialyltransferase 2 (ST6GALNAC2), found in Homo sapiens (Human).